A 416-amino-acid chain; its full sequence is Serine hydroxymethyltransferase (416 aa).

(6S)-5,6,7,8-tetrahydrofolate contacts are provided by residues Leu119 and 123 to 125 (GHL). The residue at position 228 (Lys228) is an N6-(pyridoxal phosphate)lysine. Residue Glu243 coordinates (6S)-5,6,7,8-tetrahydrofolate.

This sequence belongs to the SHMT family. In terms of assembly, homodimer. Pyridoxal 5'-phosphate is required as a cofactor.

The protein localises to the cytoplasm. It carries out the reaction (6R)-5,10-methylene-5,6,7,8-tetrahydrofolate + glycine + H2O = (6S)-5,6,7,8-tetrahydrofolate + L-serine. The protein operates within one-carbon metabolism; tetrahydrofolate interconversion. It functions in the pathway amino-acid biosynthesis; glycine biosynthesis; glycine from L-serine: step 1/1. Functionally, catalyzes the reversible interconversion of serine and glycine with tetrahydrofolate (THF) serving as the one-carbon carrier. This reaction serves as the major source of one-carbon groups required for the biosynthesis of purines, thymidylate, methionine, and other important biomolecules. Also exhibits THF-independent aldolase activity toward beta-hydroxyamino acids, producing glycine and aldehydes, via a retro-aldol mechanism. The sequence is that of Serine hydroxymethyltransferase from Desulforapulum autotrophicum (strain ATCC 43914 / DSM 3382 / VKM B-1955 / HRM2) (Desulfobacterium autotrophicum).